The following is a 230-amino-acid chain: Large ribosomal subunit protein uL1 (230 aa).

This sequence belongs to the universal ribosomal protein uL1 family. Part of the 50S ribosomal subunit.

In terms of biological role, binds directly to 23S rRNA. The L1 stalk is quite mobile in the ribosome, and is involved in E site tRNA release. Its function is as follows. Protein L1 is also a translational repressor protein, it controls the translation of the L11 operon by binding to its mRNA. In Bradyrhizobium sp. (strain BTAi1 / ATCC BAA-1182), this protein is Large ribosomal subunit protein uL1.